The primary structure comprises 478 residues: Kynureninase (478 aa).

Residues Leu-150, Thr-151, 178–181, Ser-234, Asp-263, His-266, and Tyr-288 each bind pyridoxal 5'-phosphate; that span reads FPSD. At Lys-289 the chain carries N6-(pyridoxal phosphate)lysine. 2 residues coordinate pyridoxal 5'-phosphate: Trp-318 and Asn-346.

This sequence belongs to the kynureninase family. Homodimer. Requires pyridoxal 5'-phosphate as cofactor.

Its subcellular location is the cytoplasm. The catalysed reaction is L-kynurenine + H2O = anthranilate + L-alanine + H(+). It catalyses the reaction 3-hydroxy-L-kynurenine + H2O = 3-hydroxyanthranilate + L-alanine + H(+). It participates in amino-acid degradation; L-kynurenine degradation; L-alanine and anthranilate from L-kynurenine: step 1/1. The protein operates within cofactor biosynthesis; NAD(+) biosynthesis; quinolinate from L-kynurenine: step 2/3. Its function is as follows. Catalyzes the cleavage of L-kynurenine (L-Kyn) and L-3-hydroxykynurenine (L-3OHKyn) into anthranilic acid (AA) and 3-hydroxyanthranilic acid (3-OHAA), respectively. The chain is Kynureninase from Caenorhabditis elegans.